We begin with the raw amino-acid sequence, 179 residues long: Disulfide bond formation protein B (179 aa).

Residues 1-14 lie on the Cytoplasmic side of the membrane; the sequence is MLSYFKELSLRRPA. Residues 15 to 31 traverse the membrane as a helical segment; it reads WLLLATLACTLEVTGLY. Over 32 to 49 the chain is Periplasmic; it reads FQHKLGLIPCVMCIYERV. Cys41 and Cys44 form a disulfide bridge. A helical transmembrane segment spans residues 50–65; the sequence is ALTGLLIAGLIALIAP. Topologically, residues 66 to 72 are cytoplasmic; the sequence is NFFLFRW. Residues 73-90 traverse the membrane as a helical segment; the sequence is LALVLWGFSAFKGLSLSI. The Periplasmic segment spans residues 91-146; the sequence is KHYDYQANPSPWNQCEFKPQFPQTIPLDEWFPNIFAAGTVNCSEKQWQMLGWGMPE. Residues Cys105 and Cys132 are joined by a disulfide bond. A helical transmembrane segment spans residues 147 to 165; that stretch reads WLIVAFSLFMLFFLIVFMS. The Cytoplasmic portion of the chain corresponds to 166–179; it reads QFKRAKPQYRSVFR.

Belongs to the DsbB family.

It localises to the cell inner membrane. In terms of biological role, required for disulfide bond formation in some periplasmic proteins. Acts by oxidizing the DsbA protein. In Haemophilus ducreyi (strain 35000HP / ATCC 700724), this protein is Disulfide bond formation protein B.